Consider the following 645-residue polypeptide: ATP-dependent zinc metalloprotease FtsH 3 (645 aa).

The Cytoplasmic segment spans residues 1-11; it reads MQNKRNQSRVL. The chain crosses the membrane as a helical span at residues 12-32; it reads WLLLIYITIGIFIYVGVNSLI. The Periplasmic portion of the chain corresponds to 33–110; it reads GTPDVSKIEY…YVRSLENSWW (78 aa). The chain crosses the membrane as a helical span at residues 111 to 131; it reads ISILTFLLPVFLLIFLFTFLF. Topologically, residues 132–645 are cytoplasmic; the sequence is RSSGGGANQG…ENNLIERKGI (514 aa). Residue 202–209 coordinates ATP; that stretch reads GEPGTGKT. A Zn(2+)-binding site is contributed by His-424. Residue Glu-425 is part of the active site. Residues His-428 and Asp-501 each contribute to the Zn(2+) site.

The protein in the central section; belongs to the AAA ATPase family. This sequence in the C-terminal section; belongs to the peptidase M41 family. Homohexamer. Requires Zn(2+) as cofactor.

It localises to the cell inner membrane. Acts as a processive, ATP-dependent zinc metallopeptidase for both cytoplasmic and membrane proteins. Plays a role in the quality control of integral membrane proteins. This Petrotoga mobilis (strain DSM 10674 / SJ95) protein is ATP-dependent zinc metalloprotease FtsH 3.